A 205-amino-acid polypeptide reads, in one-letter code: Small ribosomal subunit protein uS4 (205 aa).

The segment at 18–46 (NIWGRSKSPVNRREYGPGQHGQRRKGKLS) is disordered. Positions 94 to 157 (RRLDAVVYRA…RQMTLVLEAQ (64 aa)) constitute an S4 RNA-binding domain.

The protein belongs to the universal ribosomal protein uS4 family. Part of the 30S ribosomal subunit. Contacts protein S5. The interaction surface between S4 and S5 is involved in control of translational fidelity.

Its function is as follows. One of the primary rRNA binding proteins, it binds directly to 16S rRNA where it nucleates assembly of the body of the 30S subunit. With S5 and S12 plays an important role in translational accuracy. The sequence is that of Small ribosomal subunit protein uS4 from Xanthobacter autotrophicus (strain ATCC BAA-1158 / Py2).